The chain runs to 252 residues: 3-dehydroquinate dehydratase (252 aa).

Residues Ser21, 46–48 (EWR), and Arg82 contribute to the 3-dehydroquinate site. The active-site Proton donor/acceptor is the His143. The active-site Schiff-base intermediate with substrate is the Lys170. 3-dehydroquinate is bound by residues Arg213, Ser232, and Gln236.

Belongs to the type-I 3-dehydroquinase family. Homodimer.

It carries out the reaction 3-dehydroquinate = 3-dehydroshikimate + H2O. It functions in the pathway metabolic intermediate biosynthesis; chorismate biosynthesis; chorismate from D-erythrose 4-phosphate and phosphoenolpyruvate: step 3/7. Its function is as follows. Involved in the third step of the chorismate pathway, which leads to the biosynthesis of aromatic amino acids. Catalyzes the cis-dehydration of 3-dehydroquinate (DHQ) and introduces the first double bond of the aromatic ring to yield 3-dehydroshikimate. The sequence is that of 3-dehydroquinate dehydratase from Escherichia coli O8 (strain IAI1).